A 690-amino-acid polypeptide reads, in one-letter code: Elongation factor G (690 aa).

Residues Ser-8–Asn-283 form the tr-type G domain. Residues Ala-17–Thr-24, Asp-81–His-85, and Asn-135–Asp-138 each bind GTP.

It belongs to the TRAFAC class translation factor GTPase superfamily. Classic translation factor GTPase family. EF-G/EF-2 subfamily.

It is found in the cytoplasm. In terms of biological role, catalyzes the GTP-dependent ribosomal translocation step during translation elongation. During this step, the ribosome changes from the pre-translocational (PRE) to the post-translocational (POST) state as the newly formed A-site-bound peptidyl-tRNA and P-site-bound deacylated tRNA move to the P and E sites, respectively. Catalyzes the coordinated movement of the two tRNA molecules, the mRNA and conformational changes in the ribosome. This is Elongation factor G from Ehrlichia canis (strain Jake).